The following is a 509-amino-acid chain: AAA ATPase forming ring-shaped complexes (509 aa).

A coiled-coil region spans residues Ala11–Ala50. Gly236–Leu241 serves as a coordination point for ATP.

The protein belongs to the AAA ATPase family. As to quaternary structure, homohexamer. Assembles into a hexameric ring structure.

The protein is AAA ATPase forming ring-shaped complexes of Corynebacterium diphtheriae (strain ATCC 700971 / NCTC 13129 / Biotype gravis).